A 290-amino-acid chain; its full sequence is Phosphatidylglycerol--prolipoprotein diacylglyceryl transferase (290 aa).

7 consecutive transmembrane segments (helical) span residues 21–41 (VALH…MWLA), 60–80 (LLYA…VLFY), 96–116 (WDGG…MVIF), 124–144 (FFQV…AGRL), 198–218 (SQLY…NLFI), 225–245 (GSVS…VEFF), and 260–280 (ISMG…MMIW). Arg143 is an a 1,2-diacyl-sn-glycero-3-phospho-(1'-sn-glycerol) binding site.

Belongs to the Lgt family.

The protein resides in the cell inner membrane. The enzyme catalyses L-cysteinyl-[prolipoprotein] + a 1,2-diacyl-sn-glycero-3-phospho-(1'-sn-glycerol) = an S-1,2-diacyl-sn-glyceryl-L-cysteinyl-[prolipoprotein] + sn-glycerol 1-phosphate + H(+). The protein operates within protein modification; lipoprotein biosynthesis (diacylglyceryl transfer). Its function is as follows. Catalyzes the transfer of the diacylglyceryl group from phosphatidylglycerol to the sulfhydryl group of the N-terminal cysteine of a prolipoprotein, the first step in the formation of mature lipoproteins. The protein is Phosphatidylglycerol--prolipoprotein diacylglyceryl transferase of Enterobacter sp. (strain 638).